Consider the following 153-residue polypeptide: Inner membrane protein YjiG (153 aa).

At 1–31 the chain is on the periplasmic side; it reads MTTQVRKNVMDMFIDGARRGFTIATTNLLPN. A helical membrane pass occupies residues 32 to 52; it reads VVMAFVIIQALKITGLLDWVG. The Cytoplasmic segment spans residues 53 to 68; sequence HICEPVMALWGLPGEA. A run of 2 helical transmembrane segments spans residues 69–89 and 90–110; these read ATVL…AASL and ATAG…MYLM. At 111–132 the chain is on the cytoplasmic side; the sequence is GNPVQNVGRCLGTAEVNAKYYP. Residues 133–153 form a helical membrane-spanning segment; that stretch reads HIITVCVINALLSIWVMQLIV.

Belongs to the SpmB family.

It is found in the cell inner membrane. The polypeptide is Inner membrane protein YjiG (yjiG) (Escherichia coli O157:H7).